Consider the following 419-residue polypeptide: UDP-N-acetylglucosamine 1-carboxyvinyltransferase 2 (419 aa).

22 to 23 (KN) is a phosphoenolpyruvate binding site. R92 provides a ligand contact to UDP-N-acetyl-alpha-D-glucosamine. C116 acts as the Proton donor in catalysis. C116 is modified (2-(S-cysteinyl)pyruvic acid O-phosphothioketal). UDP-N-acetyl-alpha-D-glucosamine is bound by residues 121–125 (RPIDL), D306, and I328.

Belongs to the EPSP synthase family. MurA subfamily.

The protein localises to the cytoplasm. The enzyme catalyses phosphoenolpyruvate + UDP-N-acetyl-alpha-D-glucosamine = UDP-N-acetyl-3-O-(1-carboxyvinyl)-alpha-D-glucosamine + phosphate. Its pathway is cell wall biogenesis; peptidoglycan biosynthesis. In terms of biological role, cell wall formation. Adds enolpyruvyl to UDP-N-acetylglucosamine. In Streptococcus pyogenes serotype M1, this protein is UDP-N-acetylglucosamine 1-carboxyvinyltransferase 2.